We begin with the raw amino-acid sequence, 189 residues long: dCTP deaminase (189 aa).

DCTP is bound by residues 112-117 (KSTYAR), 136-138 (TLE), Gln157, Tyr171, and Gln181. Residue Glu138 is the Proton donor/acceptor of the active site.

The protein belongs to the dCTP deaminase family. In terms of assembly, homotrimer.

The enzyme catalyses dCTP + H2O + H(+) = dUTP + NH4(+). The protein operates within pyrimidine metabolism; dUMP biosynthesis; dUMP from dCTP (dUTP route): step 1/2. Catalyzes the deamination of dCTP to dUTP. This Halorhodospira halophila (strain DSM 244 / SL1) (Ectothiorhodospira halophila (strain DSM 244 / SL1)) protein is dCTP deaminase.